A 432-amino-acid polypeptide reads, in one-letter code: Glutamyl-tRNA reductase (432 aa).

Substrate is bound by residues 50–53 (TCNR), serine 110, 115–117 (ETQ), and glutamine 121. Cysteine 51 acts as the Nucleophile in catalysis. 190 to 195 (GAGEMS) provides a ligand contact to NADP(+).

The protein belongs to the glutamyl-tRNA reductase family. In terms of assembly, homodimer.

It carries out the reaction (S)-4-amino-5-oxopentanoate + tRNA(Glu) + NADP(+) = L-glutamyl-tRNA(Glu) + NADPH + H(+). Its pathway is porphyrin-containing compound metabolism; protoporphyrin-IX biosynthesis; 5-aminolevulinate from L-glutamyl-tRNA(Glu): step 1/2. Functionally, catalyzes the NADPH-dependent reduction of glutamyl-tRNA(Glu) to glutamate 1-semialdehyde (GSA). This is Glutamyl-tRNA reductase from Aliarcobacter butzleri (strain RM4018) (Arcobacter butzleri).